We begin with the raw amino-acid sequence, 229 residues long: Potassium/proton antiporter CemA (229 aa).

3 helical membrane passes run 6–26 (AFIP…ISLC), 107–127 (ILHF…SFWG), and 189–209 (ILSG…KYWI).

Belongs to the CemA family.

It is found in the plastid. The protein resides in the chloroplast inner membrane. It catalyses the reaction K(+)(in) + H(+)(out) = K(+)(out) + H(+)(in). Its function is as follows. Contributes to K(+)/H(+) antiport activity by supporting proton efflux to control proton extrusion and homeostasis in chloroplasts in a light-dependent manner to modulate photosynthesis. Prevents excessive induction of non-photochemical quenching (NPQ) under continuous-light conditions. Indirectly promotes efficient inorganic carbon uptake into chloroplasts. The polypeptide is Potassium/proton antiporter CemA (Draba nemorosa (Woodland whitlowgrass)).